A 97-amino-acid chain; its full sequence is Transcription and mRNA export factor SUS1 (97 aa).

This sequence belongs to the ENY2 family. Component of the nuclear pore complex (NPC)-associated TREX-2 complex (transcription and export complex 2), composed of at least SUS1, SAC3, THP1, SEM1, and CDC31. TREX-2 contains 2 SUS1 chains. The TREX-2 complex interacts with the nucleoporin NUP1. Component of the 1.8 MDa SAGA transcription coactivator-HAT complex. SAGA is built of 5 distinct domains with specialized functions. Within the SAGA complex, SUS1, SGF11, SGF73 and UBP8 form an additional subcomplex of SAGA called the DUB module (deubiquitination module). Interacts directly with THP1, SAC3, SGF11, and with the RNA polymerase II.

It is found in the nucleus. Its subcellular location is the nucleoplasm. It localises to the cytoplasm. The protein resides in the P-body. In terms of biological role, involved in mRNA export coupled transcription activation by association with both the TREX-2 and the SAGA complexes. At the promoters, SAGA is required for recruitment of the basal transcription machinery. It influences RNA polymerase II transcriptional activity through different activities such as TBP interaction and promoter selectivity, interaction with transcription activators, and chromatin modification through histone acetylation and deubiquitination. Within the SAGA complex, participates in a subcomplex required for deubiquitination of H2B and for the maintenance of steady-state H3 methylation levels. The TREX-2 complex functions in docking export-competent ribonucleoprotein particles (mRNPs) to the nuclear entrance of the nuclear pore complex (nuclear basket). TREX-2 participates in mRNA export and accurate chromatin positioning in the nucleus by tethering genes to the nuclear periphery. May also be involved in cytoplasmic mRNA decay by interaction with components of P-bodies. The polypeptide is Transcription and mRNA export factor SUS1 (Meyerozyma guilliermondii (strain ATCC 6260 / CBS 566 / DSM 6381 / JCM 1539 / NBRC 10279 / NRRL Y-324) (Yeast)).